The following is a 32-amino-acid chain: Photosystem II reaction center protein T (32 aa).

The chain crosses the membrane as a helical span at residues 3 to 23; that stretch reads ALVYVFLLIGTLMIIFFAIFF.

It belongs to the PsbT family. In terms of assembly, PSII is composed of 1 copy each of membrane proteins PsbA, PsbB, PsbC, PsbD, PsbE, PsbF, PsbH, PsbI, PsbJ, PsbK, PsbL, PsbM, PsbT, PsbY, PsbZ, Psb30/Ycf12, at least 3 peripheral proteins of the oxygen-evolving complex and a large number of cofactors. It forms dimeric complexes.

The protein localises to the plastid. The protein resides in the chloroplast thylakoid membrane. Its function is as follows. Found at the monomer-monomer interface of the photosystem II (PS II) dimer, plays a role in assembly and dimerization of PSII. PSII is a light-driven water plastoquinone oxidoreductase, using light energy to abstract electrons from H(2)O, generating a proton gradient subsequently used for ATP formation. This is Photosystem II reaction center protein T from Cyanidioschyzon merolae (strain NIES-3377 / 10D) (Unicellular red alga).